A 449-amino-acid polypeptide reads, in one-letter code: Tubulin alpha chain (449 aa).

Gln-11 serves as a coordination point for GTP. Lys-40 carries the N6-acetyllysine modification. GTP is bound by residues Glu-71, Ser-140, Gly-144, Thr-145, Thr-179, Asn-206, and Asn-228. Mg(2+) is bound at residue Glu-71. Glu-254 is an active-site residue.

Belongs to the tubulin family. As to quaternary structure, dimer of alpha and beta chains. A typical microtubule is a hollow water-filled tube with an outer diameter of 25 nm and an inner diameter of 15 nM. Alpha-beta heterodimers associate head-to-tail to form protofilaments running lengthwise along the microtubule wall with the beta-tubulin subunit facing the microtubule plus end conferring a structural polarity. Microtubules usually have 13 protofilaments but different protofilament numbers can be found in some organisms and specialized cells. Mg(2+) is required as a cofactor. Post-translationally, undergoes a tyrosination/detyrosination cycle, the cyclic removal and re-addition of a C-terminal tyrosine residue by the enzymes tubulin tyrosine carboxypeptidase (TTCP) and tubulin tyrosine ligase (TTL), respectively. Some glutamate residues at the C-terminus are either polyglutamylated or polyglycylated. These 2 modifications occur exclusively on glutamate residues and result in either polyglutamate or polyglycine chains on the gamma-carboxyl group. Both modifications can coexist on the same protein on adjacent residues, and lowering polyglycylation levels increases polyglutamylation, and reciprocally. The precise function of such modifications is still unclear but they regulate the assembly and dynamics of axonemal microtubules. In terms of processing, acetylation of alpha chains at Lys-40 stabilizes microtubules and affects affinity and processivity of microtubule motors. This modification has a role in multiple cellular functions, ranging from cell motility, cell cycle progression or cell differentiation to intracellular trafficking and signaling.

It is found in the cytoplasm. It localises to the cytoskeleton. It carries out the reaction GTP + H2O = GDP + phosphate + H(+). Tubulin is the major constituent of microtubules, a cylinder consisting of laterally associated linear protofilaments composed of alpha- and beta-tubulin heterodimers. Microtubules grow by the addition of GTP-tubulin dimers to the microtubule end, where a stabilizing cap forms. Below the cap, tubulin dimers are in GDP-bound state, owing to GTPase activity of alpha-tubulin. The chain is Tubulin alpha chain from Tetrahymena thermophila.